The sequence spans 838 residues: MANILRTIIENDKGELRKLEKMANKVIAYSDQMAALSDEELKAKTDEFKQRYQNGESLDDLLYEAFAVVREGAKRVLGLYPYPVQIMGGIVLHHGDVPEMRTGEGKTLTATMPVYLNALAGEGVHVVTVNEYLTERDATEMGELYSWLGLSVGINLAAKSPAEKREAYACDITYSTNSEIGFDYLRDNMVVRAENMVQRPLNYALVDEVDSILIDEARTPLIVSGPVSSETNQLYHMADSFVKSLNKDDYIIDVPSKTIGLSDSGIDKAESYFKLDNLYDIENVALTHFIDNALRANYIMILDIDYVVSEEQEILIVDQFTGRTMEGRRYSDGLHQAIEAKEGVPVQDETKTSASITYQNLFRMYKKLSGMTGTAKTEEEEFRETYNIRVIPIPTNRPIARIDHEDLLYPSLESKFKAVVEDVKERHLKGQPVLVGTVAVETSDYLSKKLVAAGIPHEVLNAKNHYREAQIIMNAGQRGAVTIATNMAGRGTDIKLGEGVRELGGLCVIGTERHESRRIDNQLRGRSGRQGDPGESQFYLSLEDELMRRFGSERIKAVLDRFKLSEEESVIKSKMFTRQVEAAQKRVEGNNYDTRKQVLQYDDVMREQREIIYAERHDVITANRDLAPEIHAMIKRTIDRFVDGNSRAPQEEKLDSILYFAKYNLVPEESISLSDLQGLSDEEIKANLYERALEVYNSQIAKLRDEEAVREFQKVLILRVVDNKWTDHIDALDQLRNAVGLRGYAQNNPVVEYQSESFRMFNDMIGSIEFDVTRLMMKAQIHEQERPRTEHNIVTTATRNISAQESDLPADVDLAKVGRNELCPCGSGKKFKNCHGRR.

Residues Q85, 103 to 107 (GEGKT), and D493 each bind ATP. Positions 823, 825, 834, and 835 each coordinate Zn(2+).

This sequence belongs to the SecA family. As to quaternary structure, monomer and homodimer. Part of the essential Sec protein translocation apparatus which comprises SecA, SecYEG and auxiliary proteins SecDF. Other proteins may also be involved. Requires Zn(2+) as cofactor.

Its subcellular location is the cell membrane. It is found in the cytoplasm. It carries out the reaction ATP + H2O + cellular proteinSide 1 = ADP + phosphate + cellular proteinSide 2.. Its function is as follows. Part of the Sec protein translocase complex. Interacts with the SecYEG preprotein conducting channel. Has a central role in coupling the hydrolysis of ATP to the transfer of proteins into and across the cell membrane, serving as an ATP-driven molecular motor driving the stepwise translocation of polypeptide chains across the membrane. The chain is Protein translocase subunit SecA 1 from Streptococcus gordonii.